A 681-amino-acid polypeptide reads, in one-letter code: Minichromosome maintenance domain-containing protein 2 (681 aa).

Ser-292 bears the Phosphoserine mark. Residues Arg-533–Ser-621 form the MCM domain.

Plays an important role in meiotic recombination and associated DNA double-strand break repair. The polypeptide is Minichromosome maintenance domain-containing protein 2 (MCMDC2) (Homo sapiens (Human)).